We begin with the raw amino-acid sequence, 262 residues long: tRNA pseudouridine synthase A (262 aa).

Asp-52 serves as the catalytic Nucleophile. Tyr-103 contacts substrate.

The protein belongs to the tRNA pseudouridine synthase TruA family.

It carries out the reaction uridine(38/39/40) in tRNA = pseudouridine(38/39/40) in tRNA. Its function is as follows. Formation of pseudouridine at positions 38, 39 and 40 in the anticodon stem and loop of transfer RNAs. This Methanococcus maripaludis (strain DSM 14266 / JCM 13030 / NBRC 101832 / S2 / LL) protein is tRNA pseudouridine synthase A.